A 114-amino-acid polypeptide reads, in one-letter code: Ig kappa chain V-I region S107A (114 aa).

Positions 1–23 (DIVMTQSPTFLAVTASKKVTISC) are framework-1. Cys-23 and Cys-94 form a disulfide bridge. A complementarity-determining-1 region spans residues 24–40 (TASESLYSSKHKVHYLA). Positions 41–55 (WYQKKPEQSPKLLIY) are framework-2. The interval 56–62 (GASNRYI) is complementarity-determining-2. Residues 63–94 (GVPDRFTGSGSGTDFTLTISSVQVEDLTHYYC) form a framework-3 region. Residues 95 to 103 (AQFYSYPLT) form a complementarity-determining-3 region. Residues 104–113 (FGAGTKLELK) are framework-4.

Anti-phosphocholine antibody. The polypeptide is Ig kappa chain V-I region S107A (Igkv7-33) (Mus musculus (Mouse)).